The sequence spans 336 residues: UPF0324 membrane protein PM1461 (336 aa).

10 helical membrane-spanning segments follow: residues 5 to 23 (TLFLGLVFIGILTFLVNLL), 30 to 52 (LNANLSALTIAILLGILFGNTFY), 62 to 84 (GVIFAKGTLLRLGIILYGFRLTL), 91 to 113 (GINAIATDTIMLISTFLLTLWLG), 123 to 140 (IVYLTAGGCSICGAAAIM), 153 to 175 (VSIAVAVIVIFGTISMFLYPLMY), 221 to 238 (MIRVMMLAPFLLLVSWLL), 250 to 271 (ISIPWFAFLFILMAVINSFSLI), 275 to 297 (IVAWIVEIDSLLLIAAMTALGLT), and 310 to 332 (PLILGALVLCWLVIGGFFVNVGI).

It belongs to the UPF0324 family.

The protein resides in the cell membrane. This Pasteurella multocida (strain Pm70) protein is UPF0324 membrane protein PM1461.